The following is a 204-amino-acid chain: General stress protein Ctc (204 aa).

Residues isoleucine 177 to glutamine 204 are disordered. A compositionally biased stretch (acidic residues) spans alanine 186–glutamine 204.

Belongs to the bacterial ribosomal protein bL25 family. CTC subfamily. In terms of assembly, part of the ribosome (presumably the 50S subunit) under heat-stress but not control growth conditions. Binds 5S rRNA.

Not required for exponential growth; probably functions in vegetatively growing cells, maybe required for accurate translation under stress conditions. This chain is General stress protein Ctc, found in Bacillus subtilis (strain 168).